Reading from the N-terminus, the 829-residue chain is Leucine--tRNA ligase (829 aa).

Positions 42 to 52 (PYPSGNLHMGH) match the 'HIGH' region motif. Residues 582-586 (KMSKS) carry the 'KMSKS' region motif. K585 contacts ATP.

The protein belongs to the class-I aminoacyl-tRNA synthetase family.

It localises to the cytoplasm. It carries out the reaction tRNA(Leu) + L-leucine + ATP = L-leucyl-tRNA(Leu) + AMP + diphosphate. The sequence is that of Leucine--tRNA ligase from Moorella thermoacetica (strain ATCC 39073 / JCM 9320).